A 397-amino-acid chain; its full sequence is Succinate--CoA ligase [ADP-forming] subunit beta (397 aa).

The 246-residue stretch at 9–254 folds into the ATP-grasp domain; that stretch reads KALLKSFGAP…ETEQDAKELE (246 aa). ATP-binding positions include K46, 53 to 55, E109, A112, and E117; that span reads GRG. Mg(2+) is bound by residues N209 and D223. Substrate is bound by residues N274 and 331 to 333; that span reads GIM.

This sequence belongs to the succinate/malate CoA ligase beta subunit family. As to quaternary structure, heterotetramer of two alpha and two beta subunits. Requires Mg(2+) as cofactor.

It carries out the reaction succinate + ATP + CoA = succinyl-CoA + ADP + phosphate. It catalyses the reaction GTP + succinate + CoA = succinyl-CoA + GDP + phosphate. It functions in the pathway carbohydrate metabolism; tricarboxylic acid cycle; succinate from succinyl-CoA (ligase route): step 1/1. Succinyl-CoA synthetase functions in the citric acid cycle (TCA), coupling the hydrolysis of succinyl-CoA to the synthesis of either ATP or GTP and thus represents the only step of substrate-level phosphorylation in the TCA. The beta subunit provides nucleotide specificity of the enzyme and binds the substrate succinate, while the binding sites for coenzyme A and phosphate are found in the alpha subunit. The sequence is that of Succinate--CoA ligase [ADP-forming] subunit beta from Hyphomonas neptunium (strain ATCC 15444).